A 546-amino-acid polypeptide reads, in one-letter code: Phosphomethylpyrimidine synthase (546 aa).

Residues N145, M174, Y203, H239, 259–261 (SRG), 300–303 (DGLR), and E339 each bind substrate. Residue H343 participates in Zn(2+) binding. Y366 contacts substrate. H407 is a binding site for Zn(2+). Positions 487, 490, and 495 each coordinate [4Fe-4S] cluster.

This sequence belongs to the ThiC family. The cofactor is [4Fe-4S] cluster.

It catalyses the reaction 5-amino-1-(5-phospho-beta-D-ribosyl)imidazole + S-adenosyl-L-methionine = 4-amino-2-methyl-5-(phosphooxymethyl)pyrimidine + CO + 5'-deoxyadenosine + formate + L-methionine + 3 H(+). It participates in cofactor biosynthesis; thiamine diphosphate biosynthesis. Its function is as follows. Catalyzes the synthesis of the hydroxymethylpyrimidine phosphate (HMP-P) moiety of thiamine from aminoimidazole ribotide (AIR) in a radical S-adenosyl-L-methionine (SAM)-dependent reaction. This Mycobacterium marinum (strain ATCC BAA-535 / M) protein is Phosphomethylpyrimidine synthase.